The chain runs to 682 residues: Potassium-transporting ATPase ATP-binding subunit (682 aa).

The next 4 membrane-spanning stretches (helical) occupy residues 34–54 (PVMFIVWIGSLLTTCISIAMA), 62–82 (ALFSAAISGWLWVTVLFANFA), 219–239 (IALTILLIALTIVFLLATATL), and 254–274 (VLVALLVCLIPTTIGGLLSAI). Asp-307 acts as the 4-aspartylphosphate intermediate in catalysis. Residues Asp-344, Glu-348, 377 to 384 (FTAQSRMS), and Lys-395 each bind ATP. Residues Asp-518 and Asp-522 each contribute to the Mg(2+) site. The next 3 membrane-spanning stretches (helical) occupy residues 588 to 608 (FAIIPAAFAATYPQLNALNIM), 616 to 636 (AILSAVIFNALIIVFLIPLAL), and 656 to 676 (IYGLGGLLVPFIGIKVIDLLL).

This sequence belongs to the cation transport ATPase (P-type) (TC 3.A.3) family. Type IA subfamily. In terms of assembly, the system is composed of three essential subunits: KdpA, KdpB and KdpC.

The protein localises to the cell inner membrane. The enzyme catalyses K(+)(out) + ATP + H2O = K(+)(in) + ADP + phosphate + H(+). Functionally, part of the high-affinity ATP-driven potassium transport (or Kdp) system, which catalyzes the hydrolysis of ATP coupled with the electrogenic transport of potassium into the cytoplasm. This subunit is responsible for energy coupling to the transport system and for the release of the potassium ions to the cytoplasm. The protein is Potassium-transporting ATPase ATP-binding subunit of Shigella sonnei (strain Ss046).